A 74-amino-acid chain; its full sequence is Mu-conotoxin-like T3.1 (74 aa).

The signal sequence occupies residues 1-19 (MSKLGVLLTICLLLFPLTA). A propeptide spanning residues 20-74 (LPMDGDEPADRPAERMQDNISSEQHPLFEERHGCCKGPEGCSSRECRPQHCCGRR) is cleaved from the precursor. Disulfide bonds link C53/C65, C54/C70, and C60/C71. At P57 the chain carries 4-hydroxyproline. E58 and E64 each carry 4-carboxyglutamate. Position 67 is a 4-hydroxyproline (P67). Cysteine amide is present on C71.

Belongs to the conotoxin M superfamily. Expressed by the venom duct.

It localises to the secreted. In terms of biological role, mu-conotoxins block voltage-gated sodium channels (Nav). In vitro, this synthetic peptide displays a low blocking effect in mouse extensor digitorum longus muscles (IC(50)=616 nM). This is Mu-conotoxin-like T3.1 from Conus tulipa (Fish-hunting cone snail).